The chain runs to 395 residues: Elongation factor Tu (395 aa).

Residues 10 to 204 (KPHCNIGTIG…TVDSYIPDPQ (195 aa)) form the tr-type G domain. The G1 stretch occupies residues 19 to 26 (GHVDHGKT). 19 to 26 (GHVDHGKT) is a GTP binding site. Thr-26 contributes to the Mg(2+) binding site. Positions 61 to 65 (GITIS) are G2. A G3 region spans residues 82–85 (DCPG). Residues 82-86 (DCPGH) and 137-140 (NKCD) contribute to the GTP site. The tract at residues 137–140 (NKCD) is G4. Residues 173-175 (SAL) are G5.

This sequence belongs to the TRAFAC class translation factor GTPase superfamily. Classic translation factor GTPase family. EF-Tu/EF-1A subfamily. In terms of assembly, monomer.

It localises to the cytoplasm. It carries out the reaction GTP + H2O = GDP + phosphate + H(+). Its function is as follows. GTP hydrolase that promotes the GTP-dependent binding of aminoacyl-tRNA to the A-site of ribosomes during protein biosynthesis. The polypeptide is Elongation factor Tu (Agathobacter rectalis (strain ATCC 33656 / DSM 3377 / JCM 17463 / KCTC 5835 / VPI 0990) (Eubacterium rectale)).